The primary structure comprises 434 residues: GTPase Obg (434 aa).

Residues 1 to 158 enclose the Obg domain; the sequence is MFIDRAKIYV…RWLYLELKLL (158 aa). Residues 159–328 enclose the OBG-type G domain; sequence ADVGLLGLPN…LLELMEKYVK (170 aa). Residues 165-172, 190-194, 211-214, 280-283, and 309-311 contribute to the GTP site; these read GLPNAGKS, FTTKT, DIPG, NKID, and SAK. Ser-172 and Thr-192 together coordinate Mg(2+). Positions 347 to 425 constitute an OCT domain; the sequence is KQENKKQEIP…IGNYVFKYNS (79 aa).

It belongs to the TRAFAC class OBG-HflX-like GTPase superfamily. OBG GTPase family. Monomer. The cofactor is Mg(2+).

The protein localises to the cytoplasm. An essential GTPase which binds GTP, GDP and possibly (p)ppGpp with moderate affinity, with high nucleotide exchange rates and a fairly low GTP hydrolysis rate. Plays a role in control of the cell cycle, stress response, ribosome biogenesis and in those bacteria that undergo differentiation, in morphogenesis control. In Dictyoglomus turgidum (strain DSM 6724 / Z-1310), this protein is GTPase Obg.